Here is a 121-residue protein sequence, read N- to C-terminus: Small ribosomal subunit protein uS13 (121 aa).

Residues 92–121 (RKGLPCRGQRTRTNARTRKGPRKAAQSLKK) are disordered.

This sequence belongs to the universal ribosomal protein uS13 family. Part of the 30S ribosomal subunit. Forms a loose heterodimer with protein S19. Forms two bridges to the 50S subunit in the 70S ribosome.

Functionally, located at the top of the head of the 30S subunit, it contacts several helices of the 16S rRNA. In the 70S ribosome it contacts the 23S rRNA (bridge B1a) and protein L5 of the 50S subunit (bridge B1b), connecting the 2 subunits; these bridges are implicated in subunit movement. Contacts the tRNAs in the A and P-sites. In Janthinobacterium sp. (strain Marseille) (Minibacterium massiliensis), this protein is Small ribosomal subunit protein uS13.